The chain runs to 465 residues: Probable glucan endo-1,3-beta-glucosidase eglC (465 aa).

A signal peptide spans 1-19 (MFTKTQILALALSIASAEA). The active-site Proton donor is the Glu128. The N-linked (GlcNAc...) asparagine glycan is linked to Asn183. Glu239 acts as the Nucleophile in catalysis. An N-linked (GlcNAc...) asparagine glycan is attached at Asn318. 2 stretches are compositionally biased toward low complexity: residues 320–333 (SSASASASGSSAQS) and 380–438 (SPSA…ATPA). Disordered regions lie at residues 320–356 (SSASASASGSSAQSTGFVSTTKPAASPSGSSGLGHGG) and 380–440 (SPSA…PADF). A lipid anchor (GPI-anchor amidated glycine) is attached at Gly442. Residues 443-465 (AGSRLSGSIFGAAMLVAALAVAL) constitute a propeptide, removed in mature form.

Belongs to the glycosyl hydrolase 17 family. Post-translationally, the GPI-anchor is attached to the protein in the endoplasmic reticulum and serves to target the protein to the cell surface. There, the glucosamine-inositol phospholipid moiety is cleaved off and the GPI-modified mannoprotein is covalently attached via its lipidless GPI glycan remnant to the 1,6-beta-glucan of the outer cell wall layer.

It is found in the cell membrane. Its subcellular location is the secreted. The protein resides in the cell wall. It catalyses the reaction Hydrolysis of (1-&gt;3)-beta-D-glucosidic linkages in (1-&gt;3)-beta-D-glucans.. Its function is as follows. Glucanases play a role in cell expansion during growth, in cell-cell fusion during mating, and in spore release during sporulation. This enzyme may be involved in beta-glucan degradation and also function biosynthetically as a transglycosylase. In Emericella nidulans (strain FGSC A4 / ATCC 38163 / CBS 112.46 / NRRL 194 / M139) (Aspergillus nidulans), this protein is Probable glucan endo-1,3-beta-glucosidase eglC (eglC).